We begin with the raw amino-acid sequence, 422 residues long: F-box protein At3g12350 (422 aa).

In terms of domain architecture, F-box spans 5–52; it reads ALPFCEIPEDLQLRILSLLTPAEISSFACTSKRFASLCQEDGKIWHVM. Basic and acidic residues-rich tracts occupy residues 197–207 and 242–252; these read NNRREDQRSSG and KEKERQASRTK. 2 disordered regions span residues 197–216 and 226–252; these read NNRR…LISS and LANK…SRTK.

The polypeptide is F-box protein At3g12350 (Arabidopsis thaliana (Mouse-ear cress)).